Reading from the N-terminus, the 897-residue chain is 3'-5' exonuclease DinG (897 aa).

In terms of domain architecture, Exonuclease spans 8–161 (VVDLETTGNQ…DEDAATTAKL (154 aa)). The 256-residue stretch at 241–496 (SKAVDQLGLT…KAIDQLEKQR (256 aa)) folds into the Helicase ATP-binding domain. 276–283 (ASLGSGKS) provides a ligand contact to ATP. The DEAH box motif lies at 448–451 (DEAH). A Helicase C-terminal domain is found at 703 to 893 (NIDEYVASIV…QFGKLLRQIQ (191 aa)).

Belongs to the helicase family. DinG subfamily. Type 2 sub-subfamily.

In terms of biological role, 3'-5' exonuclease. The chain is 3'-5' exonuclease DinG from Staphylococcus aureus (strain MSSA476).